Consider the following 876-residue polypeptide: Leucine--tRNA ligase (876 aa).

Residues 42 to 52 (PYPSGKLHMGH) carry the 'HIGH' region motif. Positions 634–638 (KMSKS) match the 'KMSKS' region motif. Residue Lys637 participates in ATP binding.

This sequence belongs to the class-I aminoacyl-tRNA synthetase family.

It localises to the cytoplasm. The catalysed reaction is tRNA(Leu) + L-leucine + ATP = L-leucyl-tRNA(Leu) + AMP + diphosphate. This Neisseria gonorrhoeae (strain NCCP11945) protein is Leucine--tRNA ligase.